Consider the following 400-residue polypeptide: Acetate kinase (400 aa).

Position 7 (Asn7) interacts with Mg(2+). Lys14 serves as a coordination point for ATP. Substrate is bound at residue Arg85. Asp142 functions as the Proton donor/acceptor in the catalytic mechanism. ATP-binding positions include 202 to 206 (HLGNG), 278 to 280 (DMR), and 326 to 330 (GIGEN). Residue Glu380 participates in Mg(2+) binding.

The protein belongs to the acetokinase family. Homodimer. The cofactor is Mg(2+). Requires Mn(2+) as cofactor.

The protein localises to the cytoplasm. It carries out the reaction acetate + ATP = acetyl phosphate + ADP. Its pathway is metabolic intermediate biosynthesis; acetyl-CoA biosynthesis; acetyl-CoA from acetate: step 1/2. In terms of biological role, catalyzes the formation of acetyl phosphate from acetate and ATP. Can also catalyze the reverse reaction. The sequence is that of Acetate kinase from Deinococcus deserti (strain DSM 17065 / CIP 109153 / LMG 22923 / VCD115).